A 194-amino-acid chain; its full sequence is Adenylate kinase (194 aa).

ATP is bound at residue 10-15 (GAGKGT). The tract at residues 30–59 (STGDMLRAAVAQQSEIGKRAKAVMDAGQLV) is NMP. Residues Thr31, Arg36, 57–59 (QLV), 85–88 (GYPR), and Gln92 contribute to the AMP site. Residues 126-142 (SRVAETIAKGAQVRSDD) are LID. An ATP-binding site is contributed by Arg127. AMP-binding residues include Arg139 and Arg150. An ATP-binding site is contributed by Ala178.

It belongs to the adenylate kinase family. As to quaternary structure, monomer.

It is found in the cytoplasm. The catalysed reaction is AMP + ATP = 2 ADP. Its pathway is purine metabolism; AMP biosynthesis via salvage pathway; AMP from ADP: step 1/1. Catalyzes the reversible transfer of the terminal phosphate group between ATP and AMP. Plays an important role in cellular energy homeostasis and in adenine nucleotide metabolism. The protein is Adenylate kinase of Brucella melitensis biotype 1 (strain ATCC 23456 / CCUG 17765 / NCTC 10094 / 16M).